The chain runs to 245 residues: Haloacid dehalogenase-like hydrolase domain-containing protein At2g33255 (245 aa).

The residue at position 2 (T2) is an N-acetylalanine. D39 (nucleophile) is an active-site residue. D39, D41, and D186 together coordinate Mg(2+). D41 (proton donor) is an active-site residue.

This sequence belongs to the HAD-like hydrolase superfamily. DOG/GPP family. It depends on Mg(2+) as a cofactor.

This Arabidopsis thaliana (Mouse-ear cress) protein is Haloacid dehalogenase-like hydrolase domain-containing protein At2g33255.